The chain runs to 253 residues: CD151 antigen (253 aa).

At 1–18 (MGEFNEKKTTCGTVCLKY) the chain is on the cytoplasmic side. Residues cysteine 11 and cysteine 15 are each lipidated (S-palmitoyl cysteine). The helical transmembrane segment at 19–39 (LLFTYNCCFWLAGLAVMAVGI) threads the bilayer. The Extracellular segment spans residues 40–57 (WTLALKSDYISLLASGTY). The chain crosses the membrane as a helical span at residues 58–78 (LATAYILVVAGAVVMVTGVLG). At 79–91 (CCATFKERRNLLR) the chain is on the cytoplasmic side. Residues 92-112 (LYFILLLIIFLLEIIAGVLAY) traverse the membrane as a helical segment. At 113 to 221 (VYYQQLNTEL…LETFIQEHLR (109 aa)) the chain is on the extracellular side. An N-linked (GlcNAc...) asparagine glycan is attached at asparagine 159. Residues 222–242 (VIGAVGTGIACVQVFGMIFTC) form a helical membrane-spanning segment. Residues cysteine 242 and cysteine 243 are each lipidated (S-palmitoyl cysteine). At 243-253 (CLYRSLKLEHY) the chain is on the cytoplasmic side.

Belongs to the tetraspanin (TM4SF) family. Interacts with integrins ITGA3:ITGB1, ITGA5:ITGB1, ITGA3:ITGB1 and ITGA6:ITGB4 and with CD9 and CD181. Interacts (via the second extracellular domain) with integrin ITGAV:ITGB3. Interacts with ITGA3; this interaction modulates ITGA3 glycosylation pattern. Interacts with F11R. Interacts with RAC1 and CDC42; these interactions mediate physical association of RAC1 and CDC42 with integrin adhesion receptor complexes. In terms of processing, palmitoylated. Palmitoylation by ZDHHC2 regulates CD151 expression, association with other tetraspanin family proteins and function in cell adhesion. Post-translationally, ubiquitinated by RNF128 on lysine residues present in the tetraspanin amino terminus via 'Lys-48'-linked ubiquitin leading to proteasomal degradation.

The protein localises to the cell membrane. Structural component of specialized membrane microdomains known as tetraspanin-enriched microdomains (TERMs), which act as platforms for receptor clustering and signaling. Plays a role in various cellular and molecular mechanism through its association with both integrin and non-integrin proteins. These interactions facilitate critical cellular functions, including cell-to-cell communication, wound healing, platelet aggregation, trafficking, cell motility, and angiogenesis. Via interaction with JAM-A/F11R and integrin ITGA3:ITGB1, promotes the recruitment of signaling molecules such as RAC1, CDC42 and RhoGTPases to facilitate the polarization of epithelial cells and the reorganization of the actin cytoskeleton, which are critical steps in cell migration process. Regulates the glycosylation pattern of ITGA3:ITGB1 thereby modulating its activity. Plays an essential role in the maintenance of central laminin-binding integrin ITGA6:ITGB4-containing adhesion complexes. Essential for the proper assembly of the glomerular and tubular basement membranes in kidney. Contributes to T-cell activation by modulating integrin signaling leading to activation of downstream targets PTK2 and MAPK1/MAPK3. The polypeptide is CD151 antigen (CD151) (Chlorocebus aethiops (Green monkey)).